A 428-amino-acid chain; its full sequence is Glutamate-1-semialdehyde 2,1-aminomutase 2 (428 aa).

An N6-(pyridoxal phosphate)lysine modification is found at lysine 267.

Belongs to the class-III pyridoxal-phosphate-dependent aminotransferase family. HemL subfamily. As to quaternary structure, homodimer. Pyridoxal 5'-phosphate serves as cofactor.

It is found in the cytoplasm. It catalyses the reaction (S)-4-amino-5-oxopentanoate = 5-aminolevulinate. It functions in the pathway porphyrin-containing compound metabolism; protoporphyrin-IX biosynthesis; 5-aminolevulinate from L-glutamyl-tRNA(Glu): step 2/2. This Oceanobacillus iheyensis (strain DSM 14371 / CIP 107618 / JCM 11309 / KCTC 3954 / HTE831) protein is Glutamate-1-semialdehyde 2,1-aminomutase 2.